The primary structure comprises 195 residues: Ras-related protein Rab-31 (195 aa).

GTP is bound by residues Gly16, Gly18, Lys19, Ser20, Ser21, Asp32, and His33. Ser20 contributes to the Mg(2+) binding site. 2 short sequence motifs (switch) span residues His30–Ser42 and Ala63–Ser79. Ser36 is modified (phosphoserine). 6 residues coordinate GTP: Thr38, Gly64, Asn119, Asp122, Ala150, and Lys151. Residue Thr38 participates in Mg(2+) binding. S-geranylgeranyl cysteine attachment occurs at residues Cys194 and Cys195.

This sequence belongs to the small GTPase superfamily. Rab family. In terms of assembly, interacts with OCRL. Interacts with NGFR. Interacts (in GDP-bound form) with RIN3 and GAPVD1, which function as guanine exchange factors (GEF). Interacts (in GTP-bound form) with EEA1. Interacts with EGFR. Interacts (in GTP-bound form) with APPL2; interaction contributes to or enhances recruitment of APPL2 to the phagosomes; interaction enhances Fc-gamma receptor-mediated phagocytosis through PI3K/Akt signaling in macrophages. Mg(2+) serves as cofactor. In terms of tissue distribution, highest expression in placenta and brain with lower levels in heart and lung. Not detected in liver, skeletal muscle, kidney or pancreas.

The protein localises to the golgi apparatus. It is found in the trans-Golgi network. Its subcellular location is the trans-Golgi network membrane. It localises to the early endosome. The protein resides in the cytoplasmic vesicle. The protein localises to the phagosome. It is found in the phagosome membrane. It catalyses the reaction GTP + H2O = GDP + phosphate + H(+). With respect to regulation, regulated by guanine nucleotide exchange factors (GEFs) including RIN3 and GAPVD1 which promote the exchange of bound GDP for free GTP. Regulated by GTPase activating proteins (GAPs) which increase the GTP hydrolysis activity. Inhibited by GDP dissociation inhibitors (GDIs) which prevent Rab-GDP dissociation. Functionally, the small GTPases Rab are key regulators of intracellular membrane trafficking, from the formation of transport vesicles to their fusion with membranes. Rabs cycle between an inactive GDP-bound form and an active GTP-bound form that is able to recruit to membranes different set of downstream effectors directly responsible for vesicle formation, movement, tethering and fusion. Required for the integrity and for normal function of the Golgi apparatus and the trans-Golgi network. Plays a role in insulin-stimulated translocation of GLUT4 to the cell membrane. Plays a role in M6PR transport from the trans-Golgi network to endosomes. Plays a role in the internalization of EGFR from the cell membrane into endosomes. Plays a role in the maturation of phagosomes that engulf pathogens, such as S.aureus and M.tuberculosis. The protein is Ras-related protein Rab-31 of Homo sapiens (Human).